We begin with the raw amino-acid sequence, 1262 residues long: Structural maintenance of chromosomes protein 1 (1262 aa).

Positions 171–497 (SRSHEFQAEY…VAVVRQLSEA (327 aa)) form a coiled coil. An SMC hinge domain is found at 524-642 (SVYGRLVDLC…ESQEDAKQLA (119 aa)). Residues 680–937 (KKWDEKVVKQ…RLESLLTKKQ (258 aa)) adopt a coiled-coil conformation. A disordered region spans residues 965–994 (EYEEDDGDDTASQSSQSATDGPSVSEEQIQ). A compositionally biased stretch (polar residues) spans 974-991 (TASQSSQSATDGPSVSEE). The stretch at 1017–1086 (DGVRQMSNRL…QQFEKVKTDR (70 aa)) forms a coiled coil. The DA-box signature appears at 1148-1183 (LSGGEKTIAALALLFAVHGRNPAPFFVLDEIDAALD).

The protein belongs to the SMC family. SMC1 subfamily. Component of the cohesin complex, composed of the smc-1 and smc-3 heterodimer attached via their SMC hinge domain, scc-1 which links them, and scc-3. Interacts with smc-3, scc-1, scc-3 and tim-1.

The protein resides in the nucleus. It localises to the chromosome. In terms of biological role, involved in chromosome cohesion during cell cycle and in DNA repair. Required for chromosome segregation during mitosis. Central component of cohesin complex. The cohesin complex is required for the cohesion of sister chromatids after DNA replication. The cohesin complex apparently forms a large proteinaceous ring within which sister chromatids can be trapped. At anaphase, the complex is cleaved and dissociates from chromatin, allowing sister chromatids to segregate. In Caenorhabditis elegans, this protein is Structural maintenance of chromosomes protein 1.